Here is an 806-residue protein sequence, read N- to C-terminus: Hyperosmolality-gated Ca2+ permeable channel 1.8 (806 aa).

The next 10 membrane-spanning stretches (helical) occupy residues Ile-7 to Val-27, Ile-102 to Val-122, Lys-157 to Tyr-177, Leu-375 to Val-395, Phe-427 to Met-447, Tyr-467 to Glu-487, Ala-512 to Leu-532, Phe-576 to Phe-596, Val-626 to Ala-646, and Ala-650 to Tyr-670. Residues Ser-726–Ser-786 form a disordered region. The segment covering Ser-731–Thr-750 has biased composition (basic and acidic residues). Thr-735 is modified (phosphothreonine). Residues Gln-751–Ser-762 are compositionally biased toward polar residues. The span at Ser-775 to Ser-786 shows a compositional bias: low complexity.

It belongs to the CSC1 (TC 1.A.17) family.

Its subcellular location is the golgi apparatus membrane. It is found in the cell membrane. Functionally, acts as an osmosensitive calcium-permeable cation channel. In Arabidopsis thaliana (Mouse-ear cress), this protein is Hyperosmolality-gated Ca2+ permeable channel 1.8.